Consider the following 315-residue polypeptide: Ribosomal RNA small subunit methyltransferase H (315 aa).

S-adenosyl-L-methionine contacts are provided by residues 32-34 (GGH), Asp52, Phe78, Asp100, and Gln107.

The protein belongs to the methyltransferase superfamily. RsmH family.

The protein resides in the cytoplasm. It carries out the reaction cytidine(1402) in 16S rRNA + S-adenosyl-L-methionine = N(4)-methylcytidine(1402) in 16S rRNA + S-adenosyl-L-homocysteine + H(+). Specifically methylates the N4 position of cytidine in position 1402 (C1402) of 16S rRNA. This Psychromonas ingrahamii (strain DSM 17664 / CCUG 51855 / 37) protein is Ribosomal RNA small subunit methyltransferase H.